Consider the following 446-residue polypeptide: tRNA-2-methylthio-N(6)-dimethylallyladenosine synthase (446 aa).

In terms of domain architecture, MTTase N-terminal spans Lys-3–Arg-124. 6 residues coordinate [4Fe-4S] cluster: Cys-12, Cys-48, Cys-87, Cys-162, Cys-166, and Cys-169. The Radical SAM core domain occupies Tyr-148–Ala-380. One can recognise a TRAM domain in the interval Glu-383 to Arg-446.

This sequence belongs to the methylthiotransferase family. MiaB subfamily. As to quaternary structure, monomer. It depends on [4Fe-4S] cluster as a cofactor.

Its subcellular location is the cytoplasm. The enzyme catalyses N(6)-dimethylallyladenosine(37) in tRNA + (sulfur carrier)-SH + AH2 + 2 S-adenosyl-L-methionine = 2-methylsulfanyl-N(6)-dimethylallyladenosine(37) in tRNA + (sulfur carrier)-H + 5'-deoxyadenosine + L-methionine + A + S-adenosyl-L-homocysteine + 2 H(+). Its function is as follows. Catalyzes the methylthiolation of N6-(dimethylallyl)adenosine (i(6)A), leading to the formation of 2-methylthio-N6-(dimethylallyl)adenosine (ms(2)i(6)A) at position 37 in tRNAs that read codons beginning with uridine. This is tRNA-2-methylthio-N(6)-dimethylallyladenosine synthase from Rickettsia bellii (strain OSU 85-389).